The chain runs to 131 residues: Ribonuclease P protein component (131 aa).

It belongs to the RnpA family. Consists of a catalytic RNA component (M1 or rnpB) and a protein subunit.

It carries out the reaction Endonucleolytic cleavage of RNA, removing 5'-extranucleotides from tRNA precursor.. Functionally, RNaseP catalyzes the removal of the 5'-leader sequence from pre-tRNA to produce the mature 5'-terminus. It can also cleave other RNA substrates such as 4.5S RNA. The protein component plays an auxiliary but essential role in vivo by binding to the 5'-leader sequence and broadening the substrate specificity of the ribozyme. In Stutzerimonas stutzeri (strain A1501) (Pseudomonas stutzeri), this protein is Ribonuclease P protein component.